A 347-amino-acid polypeptide reads, in one-letter code: Biotin synthase (347 aa).

Positions 54 to 273 (NHVETASLLS…IAVARIMMPK (220 aa)) constitute a Radical SAM core domain. Cys69, Cys73, and Cys76 together coordinate [4Fe-4S] cluster. [2Fe-2S] cluster is bound by residues Cys113, Cys144, Cys204, and Arg277.

This sequence belongs to the radical SAM superfamily. Biotin synthase family. As to quaternary structure, homodimer. [4Fe-4S] cluster is required as a cofactor. Requires [2Fe-2S] cluster as cofactor.

The enzyme catalyses (4R,5S)-dethiobiotin + (sulfur carrier)-SH + 2 reduced [2Fe-2S]-[ferredoxin] + 2 S-adenosyl-L-methionine = (sulfur carrier)-H + biotin + 2 5'-deoxyadenosine + 2 L-methionine + 2 oxidized [2Fe-2S]-[ferredoxin]. It participates in cofactor biosynthesis; biotin biosynthesis; biotin from 7,8-diaminononanoate: step 2/2. Functionally, catalyzes the conversion of dethiobiotin (DTB) to biotin by the insertion of a sulfur atom into dethiobiotin via a radical-based mechanism. The sequence is that of Biotin synthase from Afipia carboxidovorans (strain ATCC 49405 / DSM 1227 / KCTC 32145 / OM5) (Oligotropha carboxidovorans).